Reading from the N-terminus, the 598-residue chain is Aspartate--tRNA(Asp/Asn) ligase (598 aa).

Residue glutamate 177 participates in L-aspartate binding. Residues 201 to 204 (QLFK) form an aspartate region. Arginine 223 provides a ligand contact to L-aspartate. ATP-binding positions include 223–225 (RDE) and glutamine 232. Histidine 456 provides a ligand contact to L-aspartate. ATP is bound at residue glutamate 493. Residue arginine 500 coordinates L-aspartate. 545-548 (GLDR) serves as a coordination point for ATP.

The protein belongs to the class-II aminoacyl-tRNA synthetase family. Type 1 subfamily. Homodimer.

It localises to the cytoplasm. It catalyses the reaction tRNA(Asx) + L-aspartate + ATP = L-aspartyl-tRNA(Asx) + AMP + diphosphate. Its function is as follows. Aspartyl-tRNA synthetase with relaxed tRNA specificity since it is able to aspartylate not only its cognate tRNA(Asp) but also tRNA(Asn). Reaction proceeds in two steps: L-aspartate is first activated by ATP to form Asp-AMP and then transferred to the acceptor end of tRNA(Asp/Asn). The sequence is that of Aspartate--tRNA(Asp/Asn) ligase from Prochlorococcus marinus (strain MIT 9215).